The chain runs to 224 residues: Glutathione S-transferase Mu 5 (224 aa).

The 88-residue stretch at 4-91 folds into the GST N-terminal domain; the sequence is KSMVLGYWDI…YIARKHNMCG (88 aa). Ser5 bears the Phosphoserine mark. Glutathione is bound by residues 10–11, 49–53, 62–63, and 75–76; these read YW, WLDVK, NL, and QS. Positions 93–211 constitute a GST C-terminal domain; sequence TEEEKIRVDI…QSDRFFKMPI (119 aa). Tyr119 is a substrate binding site.

Belongs to the GST superfamily. Mu family. In terms of assembly, homodimer. Interacts with PFKM isoform 2 and isoform 3 (via N-terminal testis-specific region).

The protein resides in the cytoplasm. It catalyses the reaction RX + glutathione = an S-substituted glutathione + a halide anion + H(+). Conjugation of reduced glutathione to a wide number of exogenous and endogenous hydrophobic electrophiles. In Mus musculus (Mouse), this protein is Glutathione S-transferase Mu 5 (Gstm5).